A 552-amino-acid chain; its full sequence is Membrane protein insertase YidC (552 aa).

The chain crosses the membrane as a helical span at residues 6 to 26 (NLLLAAIAAVILMLFIRWNHF). Polar residues-rich tracts occupy residues 32–41 (QHQAGNTPAG) and 60–70 (PTASDTPQATA). The disordered stretch occupies residues 32–70 (QHQAGNTPAGSSIAAIAPDSNGDIPSAVPTASDTPQATA). Transmembrane regions (helical) follow at residues 365 to 387 (WGLA…SAAS), 431 to 451 (FGGC…YWVL), 472 to 492 (MDPY…MQKL), and 508 to 528 (LPFV…LYWV).

This sequence belongs to the OXA1/ALB3/YidC family. Type 1 subfamily. Interacts with the Sec translocase complex via SecD. Specifically interacts with transmembrane segments of nascent integral membrane proteins during membrane integration.

The protein resides in the cell inner membrane. Functionally, required for the insertion and/or proper folding and/or complex formation of integral membrane proteins into the membrane. Involved in integration of membrane proteins that insert both dependently and independently of the Sec translocase complex, as well as at least some lipoproteins. Aids folding of multispanning membrane proteins. This chain is Membrane protein insertase YidC, found in Cellvibrio japonicus (strain Ueda107) (Pseudomonas fluorescens subsp. cellulosa).